Reading from the N-terminus, the 160-residue chain is Anaerobic nitrite reductase Glb1-1 (160 aa).

Residues glycine 8 to lysine 157 enclose the Globin domain. Positions glutamate 41–serine 45 match the Homodimerization motif. Serine 51, lysine 65, histidine 69, lysine 99, and histidine 104 together coordinate heme b. The Homodimerization motif lies at aspartate 111 to glutamate 123.

It belongs to the plant globin family. In terms of assembly, homodimer. The cofactor is heme b.

The enzyme catalyses Fe(III)-heme b-[protein] + nitric oxide + H2O = Fe(II)-heme b-[protein] + nitrite + 2 H(+). Functionally, phytoglobin that reduces nitrite to nitric oxide (NO) under anoxic conditions (e.g. during flooding or in waterlogged soil) and upon root nodulation. Required for general plant development and during nodulation, especially for the onset of symbiosis. Monitors nitric oxide (NO) levels during early phase of the nitrogen-fixing symbiosis and buffers oxygen in functioning nodules. May not function as an oxygen storage or transport protein. Has an unusually high affinity for O(2) through a hexacoordinate heme iron because of a very low dissociation constant. The chain is Anaerobic nitrite reductase Glb1-1 from Medicago truncatula (Barrel medic).